Consider the following 548-residue polypeptide: Natural resistance-associated macrophage protein 1 (548 aa).

Residues 1-38 (MSGDTGPPKQGGTRYGSISSPPSPEPQQAPPGGTYLSE) form a disordered region. The Cytoplasmic segment spans residues 1–55 (MSGDTGPPKQGGTRYGSISSPPSPEPQQAPPGGTYLSEKIPIPDTESGTFSLRKL). The chain crosses the membrane as a helical span at residues 56–73 (WAFTGPGFLMSIAFLDPG). The Extracellular portion of the chain corresponds to 74–82 (NIESDLQAG). Residues 83–102 (AVAGFKLLWVLLWATVLGLL) traverse the membrane as a helical segment. At 103–139 (CQRLAARLGVVTGKDLGEVCHLYYPKVPRILLWLTIE) the chain is on the cytoplasmic side. The chain crosses the membrane as a helical span at residues 140-160 (LAIVGSDMQEVIGTAIAFSLL). At 161 to 164 (SAGR) the chain is on the extracellular side. The chain crosses the membrane as a helical span at residues 165 to 184 (IPLWGGVLITVVDTFFFLFL). The Cytoplasmic segment spans residues 185–193 (DNYGLRKLE). The chain crosses the membrane as a helical span at residues 194–214 (AFFGFLITIMALTFGYEYVVA). Topologically, residues 215–237 (QPAQGALLQGLFLPSCPGCGQPE) are extracellular. The helical transmembrane segment at 238 to 256 (LLQAVGIIGAIIMPHNIYL) threads the bilayer. At 257 to 284 (HSSLVKSREVDRSRRADIREANMYFLIE) the chain is on the cytoplasmic side. Residues 285-304 (ATIALSVSFLINLFVMAVFG) form a helical membrane-spanning segment. The Extracellular portion of the chain corresponds to 305-346 (QAFYKQTNQAAFNICADSSLHDYAPIFPRNNLTVAVDIYQGG). N-linked (GlcNAc...) asparagine glycosylation occurs at Asn-335. Residues 347 to 366 (VILGCLFGPPALYIWAVGLL) traverse the membrane as a helical segment. Over 367-397 (AAGQSSTMTGTYAGQFVMEGFLKLRWSRFAR) the chain is Cytoplasmic. A helical membrane pass occupies residues 398–415 (VLLTRSCAILPTVLLAVF). Over 416–426 (RDLRDLSGLND) the chain is Extracellular. The chain crosses the membrane as a helical span at residues 427 to 447 (LLNVLQSLLLPFAVLPILTFT). The Cytoplasmic portion of the chain corresponds to 448 to 463 (SMPALMQEFANGLVSK). The helical transmembrane segment at 464–485 (VITSSIMVLVCAVNLYFVISYL) threads the bilayer. Residues 486-493 (PSLPHPAY) lie on the Extracellular side of the membrane. Residues 494-513 (FSLVALLAAAYLGLTTYLVW) form a helical membrane-spanning segment. Topologically, residues 514–548 (TCLITQGATLLAHSSHQRFLYGLPEEDQEKGRTSG) are cytoplasmic.

Belongs to the NRAMP family.

The protein localises to the late endosome membrane. The protein resides in the lysosome membrane. It catalyses the reaction Zn(2+)(in) + H(+)(out) = Zn(2+)(out) + H(+)(in). The enzyme catalyses Fe(2+)(in) + H(+)(out) = Fe(2+)(out) + H(+)(in). The catalysed reaction is Mn(2+)(in) + H(+)(out) = Mn(2+)(out) + H(+)(in). In terms of biological role, macrophage-specific antiporter that fluxes metal ions in either direction against a proton gradient. Localized to late endosomal lysosomal membranes, delivers bivalent cations from the cytosol into these acidic compartments where they may directly affect antimicrobial activity. Involved in iron metabolism and host natural resistance to infection with intracellular parasites. Pathogen resistance involves sequestration of Fe(2+) and Mn(2+), cofactors of both prokaryotic and eukaryotic catalases and superoxide dismutases, not only to protect the macrophage against its own generation of reactive oxygen species, but to deny the cations to the pathogen for synthesis of its protective enzymes. In Bos taurus (Bovine), this protein is Natural resistance-associated macrophage protein 1 (SLC11A1).